A 245-amino-acid chain; its full sequence is MASRSVISFLYQQGGLSLAELPPAFLAPALYSTKASFNSQRSQFSTSSSPAARDRSRFRGVSAIHRTGPKQPLPVSKYPLPKPASPEQQEKRPANPDHGLWGFFGPNKQAIPTPEEEYAHGRAWTIQELRQKSWDDLHCLWWVTVRERNRIATSNYERKRLAAGYGDFEADNRDKTVRATQHAIKHVLRERWYAWNEARELYNGGYRPSPDEVLEEETETAMPTEVMPEELDSSTKSETTTSKNI.

2 stretches are compositionally biased toward low complexity: residues 36-49 (SFNS…TSSS) and 234-245 (STKSETTTSKNI). Disordered stretches follow at residues 36 to 98 (SFNS…NPDH) and 207 to 245 (RPSP…SKNI).

Belongs to the universal ribosomal protein uL29 family. Component of the mitochondrial large ribosomal subunit. Mature mitochondrial ribosomes consist of a small (37S) and a large (54S) subunit. The 37S subunit contains at least 33 different proteins and 1 molecule of RNA (15S). The 54S subunit contains at least 45 different proteins and 1 molecule of RNA (21S).

It localises to the mitochondrion. The sequence is that of Large ribosomal subunit protein uL29m (MRPL4) from Coccidioides immitis (strain RS) (Valley fever fungus).